The chain runs to 246 residues: 1-(5-phosphoribosyl)-5-[(5-phosphoribosylamino)methylideneamino] imidazole-4-carboxamide isomerase (246 aa).

Residue aspartate 8 is the Proton acceptor of the active site. Aspartate 129 serves as the catalytic Proton donor.

Belongs to the HisA/HisF family.

It is found in the cytoplasm. The enzyme catalyses 1-(5-phospho-beta-D-ribosyl)-5-[(5-phospho-beta-D-ribosylamino)methylideneamino]imidazole-4-carboxamide = 5-[(5-phospho-1-deoxy-D-ribulos-1-ylimino)methylamino]-1-(5-phospho-beta-D-ribosyl)imidazole-4-carboxamide. The protein operates within amino-acid biosynthesis; L-histidine biosynthesis; L-histidine from 5-phospho-alpha-D-ribose 1-diphosphate: step 4/9. The polypeptide is 1-(5-phosphoribosyl)-5-[(5-phosphoribosylamino)methylideneamino] imidazole-4-carboxamide isomerase (Desulforamulus reducens (strain ATCC BAA-1160 / DSM 100696 / MI-1) (Desulfotomaculum reducens)).